We begin with the raw amino-acid sequence, 603 residues long: NAD 5'-nucleotidase (603 aa).

The signal sequence occupies residues methionine 1–alanine 25. The Zn(2+) site is built by aspartate 44, histidine 46, aspartate 94, asparagine 126, and histidine 227. Substrate contacts are provided by residues arginine 397, arginine 437, phenylalanine 456, and tyrosine 540–aspartate 546.

Belongs to the 5'-nucleotidase family. Zn(2+) is required as a cofactor.

Its subcellular location is the periplasm. It catalyses the reaction a ribonucleoside 5'-phosphate + H2O = a ribonucleoside + phosphate. In terms of biological role, degrades NAD into adenosine and nicotinamide riboside, the latter being subsequently internalized by a specific permease. Also endowed with NAD(P) pyrophosphatase activity. Exhibits a broad substrate specificity, recognizing either mono- or dinucleotide nicotinamides and different adenosine phosphates with a maximal activity on 5'-adenosine monophosphate. This is NAD 5'-nucleotidase from Haemophilus influenzae (strain ATCC 51907 / DSM 11121 / KW20 / Rd).